Consider the following 138-residue polypeptide: UPF0355 protein SSP2326 (138 aa).

Positions 115 to 138 (NVAFETNQTKSNSHYSEETNGPKS) are disordered. A compositionally biased stretch (polar residues) spans 118–138 (FETNQTKSNSHYSEETNGPKS).

The protein belongs to the UPF0355 family.

The protein is UPF0355 protein SSP2326 of Staphylococcus saprophyticus subsp. saprophyticus (strain ATCC 15305 / DSM 20229 / NCIMB 8711 / NCTC 7292 / S-41).